A 193-amino-acid polypeptide reads, in one-letter code: Putative protein-glutamate methylesterase/protein-glutamine glutaminase (193 aa).

The region spanning 1–179 is the CheB-type methylesterase domain; it reads MNYEAIVIGV…DYVLSLEKIA (179 aa). Active-site residues include Ser11, His38, and Asp131.

Belongs to the CheB family.

Its subcellular location is the cytoplasm. It carries out the reaction [protein]-L-glutamate 5-O-methyl ester + H2O = L-glutamyl-[protein] + methanol + H(+). It catalyses the reaction L-glutaminyl-[protein] + H2O = L-glutamyl-[protein] + NH4(+). Functionally, may be involved in chemotaxis. This is Putative protein-glutamate methylesterase/protein-glutamine glutaminase (cheB2) from Leptospira interrogans serogroup Icterohaemorrhagiae serovar copenhageni (strain Fiocruz L1-130).